Here is a 582-residue protein sequence, read N- to C-terminus: Hemagglutinin-neuraminidase (582 aa).

A helical transmembrane segment spans residues 35–55 (ILVLSVQAVTLILVIVTLGEL). 3 disulfide bridges follow: Cys178-Cys202, Cys192-Cys253, and Cys244-Cys257. Asn284 and Asn329 each carry an N-linked (GlcNAc...) asparagine; by host glycan. 3 cysteine pairs are disulfide-bonded: Cys350-Cys471, Cys382-Cys392, and Cys465-Cys475. Asn400 and Asn448 each carry an N-linked (GlcNAc...) asparagine; by host glycan. The N-linked (GlcNAc...) asparagine; by host glycan is linked to Asn507. The cysteines at positions 545 and 556 are disulfide-linked.

It belongs to the paramyxoviruses hemagglutinin-neuraminidase family. As to quaternary structure, homodimer. Further forms homotetramer (dimer of dimers). Interacts with F protein trimer.

It localises to the virion membrane. It is found in the host cell membrane. It carries out the reaction Hydrolysis of alpha-(2-&gt;3)-, alpha-(2-&gt;6)-, alpha-(2-&gt;8)- glycosidic linkages of terminal sialic acid residues in oligosaccharides, glycoproteins, glycolipids, colominic acid and synthetic substrates.. Attaches the virus to alpha-2,3-linked sialic acid-containing cell receptors and thereby initiating infection. Binding of HN protein to the receptor induces a conformational change that allows the F protein to trigger virion/cell membranes fusion. Binds to the glycan motifs sialyl Lewis (SLe) and GM2 ganglioside (GM2-glycan). Functionally, neuraminidase activity ensures the efficient spread of the virus by dissociating the mature virions from the neuraminic acid containing glycoproteins. This Homo sapiens (Human) protein is Hemagglutinin-neuraminidase (HN).